The primary structure comprises 483 residues: Glutamyl-tRNA(Gln) amidotransferase subunit A (483 aa).

Active-site charge relay system residues include lysine 76 and serine 151. The Acyl-ester intermediate role is filled by serine 175.

It belongs to the amidase family. GatA subfamily. As to quaternary structure, heterotrimer of A, B and C subunits.

It carries out the reaction L-glutamyl-tRNA(Gln) + L-glutamine + ATP + H2O = L-glutaminyl-tRNA(Gln) + L-glutamate + ADP + phosphate + H(+). Its function is as follows. Allows the formation of correctly charged Gln-tRNA(Gln) through the transamidation of misacylated Glu-tRNA(Gln) in organisms which lack glutaminyl-tRNA synthetase. The reaction takes place in the presence of glutamine and ATP through an activated gamma-phospho-Glu-tRNA(Gln). This Pseudomonas fluorescens (strain Pf0-1) protein is Glutamyl-tRNA(Gln) amidotransferase subunit A.